A 485-amino-acid polypeptide reads, in one-letter code: NADH-quinone oxidoreductase subunit N (485 aa).

The next 14 membrane-spanning stretches (helical) occupy residues 8-28 (LIALLPLLIVGLTVVVVMLSI), 35-55 (FLNATLSVIGLNAALVSLWFV), 71-91 (GFAMLYTGLVLLASLATCTFA), 105-125 (FYLLVLIAALGGILLANANHL), 127-147 (SLFLGIELISLPLFGLVGYAF), 159-179 (YTILSAAASSFLLFGMALVYA), 203-223 (LLAGFGMMIVGLGFKLSLVPF), 235-255 (PAPVSTFLATASKIAIFGVVM), 271-291 (VVLAIIAFASIIFGNLMALSQ), 297-317 (LLGYSSISHLGYLLVALIALQ), 326-346 (VGVYLAGYLFSSLGAFGVVSL), 373-393 (AAVMTVMMLSLAGIPMTLGFI), 408-430 (WWLVGAVVVGSAIGLYYYLRVAV), and 455-475 (IVVLISALLVLVLGVWPQPLI).

This sequence belongs to the complex I subunit 2 family. In terms of assembly, NDH-1 is composed of 13 different subunits. Subunits NuoA, H, J, K, L, M, N constitute the membrane sector of the complex.

The protein resides in the cell inner membrane. It carries out the reaction a quinone + NADH + 5 H(+)(in) = a quinol + NAD(+) + 4 H(+)(out). In terms of biological role, NDH-1 shuttles electrons from NADH, via FMN and iron-sulfur (Fe-S) centers, to quinones in the respiratory chain. The immediate electron acceptor for the enzyme in this species is believed to be ubiquinone. Couples the redox reaction to proton translocation (for every two electrons transferred, four hydrogen ions are translocated across the cytoplasmic membrane), and thus conserves the redox energy in a proton gradient. This Shigella flexneri protein is NADH-quinone oxidoreductase subunit N.